We begin with the raw amino-acid sequence, 604 residues long: Aspartate--tRNA(Asp/Asn) ligase (604 aa).

Glu175 is an L-aspartate binding site. Positions 199-202 (QQFK) are aspartate. L-aspartate-binding residues include Arg221 and His456. Residue 221–223 (RDE) participates in ATP binding. Residue Glu496 coordinates ATP. Arg503 lines the L-aspartate pocket. 548–551 (GVDR) lines the ATP pocket.

This sequence belongs to the class-II aminoacyl-tRNA synthetase family. Type 1 subfamily. As to quaternary structure, homodimer.

It localises to the cytoplasm. The catalysed reaction is tRNA(Asx) + L-aspartate + ATP = L-aspartyl-tRNA(Asx) + AMP + diphosphate. Aspartyl-tRNA synthetase with relaxed tRNA specificity since it is able to aspartylate not only its cognate tRNA(Asp) but also tRNA(Asn). Reaction proceeds in two steps: L-aspartate is first activated by ATP to form Asp-AMP and then transferred to the acceptor end of tRNA(Asp/Asn). This is Aspartate--tRNA(Asp/Asn) ligase from Methylorubrum extorquens (strain CM4 / NCIMB 13688) (Methylobacterium extorquens).